Here is a 536-residue protein sequence, read N- to C-terminus: Uridine 5'-monophosphate transferase (536 aa).

The tract at residues 22-84 (ADHPTHTPED…GLQQCSSSPS (63 aa)) is disordered. The segment covering 31-45 (DSPQTVPSPRSSSAH) has biased composition (polar residues). A compositionally biased stretch (basic and acidic residues) spans 48 to 60 (EIQELRSLQETRP). Over residues 66–84 (RSQSRSSKHGLQQCSSSPS) the composition is skewed to polar residues. LRR repeat units follow at residues 140–164 (AGQA…LHRL), 165–189 (AHLR…SLCK), 191–211 (LERI…IGAL), 212–234 (KNLS…IGQC), 236–257 (SLTT…LANL), and 258–282 (TQLK…NLDD). One can recognise a Fido domain in the interval 377–533 (ITLDRIFKLN…LEGIATVMNQ (157 aa)).

This sequence in the C-terminal section; belongs to the fic family. As to quaternary structure, interacts with several members of the Arabidopsis RLCK VIIa subfamily.

It is found in the secreted. The protein localises to the host cell. The protein resides in the host cell membrane. It catalyses the reaction L-seryl-[protein] + UTP = O-(5'-uridylyl)-L-seryl-[protein] + diphosphate. The enzyme catalyses L-threonyl-[protein] + UTP = uridylyl-L-threonyl-[protein] + diphosphate. In terms of biological role, functions both as a virulence and an avirulence gene in Arabidopsis. Causes disease on the Kashmir (Kas) ecotype, but not on Columbia (Col-0) ecotype. Acts by directly uridylylating the conserved phosphorylation sites in the activation loop of a number of host receptor-like cytoplasmic protein kinases (RLCK), including BIK1, RIPK, PBL1 and PBL2, preventing the activation of these kinases and subsequent signal transduction. In susceptible Arabidopsis plants, uridylylation of BIK1 inhibits the PAMP-triggered immunity (PTI) signaling cascade and thereby promotes bacterial virulence. It also inhibits RPM1-dependent effector-triggered immunity (ETI) in mesophyll tissues by targeting RIPK. In contrast, in the resistant ecotype Col-0, xopAC is a major avirulence gene. Uridylylation of PBL2 triggers the PBL2-RKS1 interaction and thus the assembly of the PBL2-RKS1-ZAR1 complex, which, in turn, activates effector-triggered immunity (ETI) against X.campestris. The sequence is that of Uridine 5'-monophosphate transferase from Xanthomonas campestris pv. campestris (strain 8004).